The sequence spans 421 residues: D-inositol 3-phosphate glycosyltransferase (421 aa).

Residue His9 participates in 1D-myo-inositol 3-phosphate binding. Residues 15–16 and Gly23 contribute to the UDP-N-acetyl-alpha-D-glucosamine site; that span reads QP. 1D-myo-inositol 3-phosphate-binding positions include 20-25, Lys78, Tyr110, Thr134, and Arg154; that span reads DAGGMN. UDP-N-acetyl-alpha-D-glucosamine-binding residues include Arg231, Lys236, and Arg294. Tyr303, Gln304, and Ala306 together coordinate Mg(2+). Glu316 and Glu324 together coordinate UDP-N-acetyl-alpha-D-glucosamine. Thr330 serves as a coordination point for Mg(2+).

The protein belongs to the glycosyltransferase group 1 family. MshA subfamily. In terms of assembly, homodimer.

It carries out the reaction 1D-myo-inositol 3-phosphate + UDP-N-acetyl-alpha-D-glucosamine = 1D-myo-inositol 2-acetamido-2-deoxy-alpha-D-glucopyranoside 3-phosphate + UDP + H(+). Functionally, catalyzes the transfer of a N-acetyl-glucosamine moiety to 1D-myo-inositol 3-phosphate to produce 1D-myo-inositol 2-acetamido-2-deoxy-glucopyranoside 3-phosphate in the mycothiol biosynthesis pathway. In Corynebacterium aurimucosum (strain ATCC 700975 / DSM 44827 / CIP 107346 / CN-1) (Corynebacterium nigricans), this protein is D-inositol 3-phosphate glycosyltransferase.